Reading from the N-terminus, the 169-residue chain is Disulfide bond formation protein B (169 aa).

At 1 to 14 the chain is on the cytoplasmic side; the sequence is MNNLTLSLRRERRL. A helical transmembrane segment spans residues 15–31; the sequence is LVLLALVCLALLAGALY. The Periplasmic segment spans residues 32-49; that stretch reads LQYVKNEDPCPLCIIQRY. Cys41 and Cys44 are joined by a disulfide. Residues 50–64 form a helical membrane-spanning segment; the sequence is FFVLIAVFAFIGAGM. The Cytoplasmic portion of the chain corresponds to 65 to 71; sequence ASGAGVA. The helical transmembrane segment at 72–89 threads the bilayer; that stretch reads VTEALIVLSAAAGVGTAA. Topologically, residues 90-144 are periplasmic; that stretch reads RHLYVQLNPGFSCGFDALQPVVDSLPPARWLPGVFKVAGLCETVYPPIFGILLPG. A disulfide bridge connects residues Cys102 and Cys130. The helical transmembrane segment at 145–163 threads the bilayer; that stretch reads WALIAFVLIAVPVAVSLLR. At 164 to 169 the chain is on the cytoplasmic side; it reads HRGRLR.

The protein belongs to the DsbB family.

It localises to the cell inner membrane. In terms of biological role, required for disulfide bond formation in some periplasmic proteins. Acts by oxidizing the DsbA protein. This chain is Disulfide bond formation protein B, found in Burkholderia mallei (strain ATCC 23344).